We begin with the raw amino-acid sequence, 470 residues long: Protein ASPARTIC PROTEASE IN GUARD CELL 2 (470 aa).

Positions 1 to 19 are cleaved as a signal peptide; it reads MLLPLFFFFLHLHLHLSSS. The 336-residue stretch at 131 to 466 folds into the Peptidase A1 domain; it reads YFVRIGVGSP…DGANGFVGFG (336 aa). Aspartate 149 is a catalytic residue. 6 disulfide bridges follow: cysteine 159–cysteine 162, cysteine 165–cysteine 239, cysteine 186–cysteine 204, cysteine 191–cysteine 199, cysteine 278–cysteine 470, and cysteine 389–cysteine 431. The active site involves aspartate 350.

This sequence belongs to the peptidase A1 family.

Aspartic protease that may be involved in drought avoidance through abscisic acid signaling. This chain is Protein ASPARTIC PROTEASE IN GUARD CELL 2 (ASPG2), found in Arabidopsis thaliana (Mouse-ear cress).